A 188-amino-acid polypeptide reads, in one-letter code: MADNVFKSQDIGLRAQKKILSRMATKNIAKTFIDGTTASLLDNLYRLCKMHTGNKAKAEKLIKNIIKIVIKIGVLHRNNQFSDEELQRAENFKRKFQNTQLSIISFYEVDYTFDLAYLQKSIAESQVALKSIVQPHLTDKSLGRIDEVFDFFGDAVLLETAFKPDSPYREVMGKIVADINSAMETGDI.

The protein belongs to the TNFAIP8 family.

The protein is Tumor necrosis factor alpha-induced protein 8-like protein of Drosophila pseudoobscura pseudoobscura (Fruit fly).